The primary structure comprises 417 residues: Probable pectate lyase 20 (417 aa).

Positions 1–25 (MAVTQILVVFASALLLSMFFTGVDS) are cleaved as a signal peptide. Residues Asn-29 and Asn-53 are each glycosylated (N-linked (GlcNAc...) asparagine). Ca(2+)-binding residues include Asp-215, Asp-239, and Asp-243. Arg-295 is a catalytic residue.

This sequence belongs to the polysaccharide lyase 1 family. Ca(2+) serves as cofactor.

The enzyme catalyses Eliminative cleavage of (1-&gt;4)-alpha-D-galacturonan to give oligosaccharides with 4-deoxy-alpha-D-galact-4-enuronosyl groups at their non-reducing ends.. It functions in the pathway glycan metabolism; pectin degradation; 2-dehydro-3-deoxy-D-gluconate from pectin: step 2/5. This chain is Probable pectate lyase 20, found in Arabidopsis thaliana (Mouse-ear cress).